The primary structure comprises 83 residues: Neurotoxin-1'' (83 aa).

The N-terminal stretch at 1 to 19 (MNYLVMISLALLLMIGVES) is a signal peptide. Residues 21-82 (RDGYIVYPNN…PIKDTSRKCT (62 aa)) form the LCN-type CS-alpha/beta domain. Intrachain disulfides connect cysteine 31–cysteine 81, cysteine 35–cysteine 53, cysteine 39–cysteine 63, and cysteine 43–cysteine 65. Arginine 83 is a propeptide (removed by a carboxypeptidase (in neurotoxin-1/1')).

The protein belongs to the long (4 C-C) scorpion toxin superfamily. Sodium channel inhibitor family. Alpha subfamily. In terms of tissue distribution, expressed by the venom gland.

It is found in the secreted. Alpha toxins bind voltage-independently at site-3 of sodium channels (Nav) and inhibit the inactivation of the activated channels, thereby blocking neuronal transmission. Is active against mammals and binds with high affinity rat brain synaptosomes. The polypeptide is Neurotoxin-1'' (Androctonus australis (Sahara scorpion)).